The primary structure comprises 340 residues: GTP 3',8-cyclase (340 aa).

Positions 8–227 (KLGRPIRDLR…DMIESHFDIE (220 aa)) constitute a Radical SAM core domain. Position 17 (Arg-17) interacts with GTP. 2 residues coordinate [4Fe-4S] cluster: Cys-24 and Cys-28. Position 30 (Tyr-30) interacts with S-adenosyl-L-methionine. Cys-31 contacts [4Fe-4S] cluster. Arg-71 lines the GTP pocket. Gly-75 serves as a coordination point for S-adenosyl-L-methionine. Thr-102 is a GTP binding site. Ser-126 is an S-adenosyl-L-methionine binding site. Lys-163 lines the GTP pocket. Residue Met-197 participates in S-adenosyl-L-methionine binding. [4Fe-4S] cluster-binding residues include Cys-261 and Cys-264. 266-268 (RAR) is a binding site for GTP. Cys-278 lines the [4Fe-4S] cluster pocket.

It belongs to the radical SAM superfamily. MoaA family. As to quaternary structure, monomer and homodimer. The cofactor is [4Fe-4S] cluster.

It carries out the reaction GTP + AH2 + S-adenosyl-L-methionine = (8S)-3',8-cyclo-7,8-dihydroguanosine 5'-triphosphate + 5'-deoxyadenosine + L-methionine + A + H(+). It functions in the pathway cofactor biosynthesis; molybdopterin biosynthesis. Catalyzes the cyclization of GTP to (8S)-3',8-cyclo-7,8-dihydroguanosine 5'-triphosphate. In Staphylococcus haemolyticus (strain JCSC1435), this protein is GTP 3',8-cyclase.